The primary structure comprises 1659 residues: Vitellogenin (1659 aa).

An N-terminal signal peptide occupies residues 1–15 (MRAVVLALTLALVAS). The Vitellogenin domain occupies 24 to 662 (FAASKTYVYK…DAATLFPRTV (639 aa)). N-linked (GlcNAc...) asparagine glycosylation occurs at Asn1089. 2 stretches are compositionally biased toward low complexity: residues 1090–1111 (GTRASSSSSSSSSSSSRSSSSR) and 1119–1129 (SSSSSSSSSSR). Residues 1090 to 1163 (GTRASSSSSS…SQSTSNVISR (74 aa)) form a disordered region. The VWFD domain maps to 1389-1565 (VKCSMVRDTL…SWVLPSDSCR (177 aa)). 2 disulfides stabilise this stretch: Cys1391–Cys1528 and Cys1414–Cys1564. Asn1627 carries an N-linked (GlcNAc...) asparagine glycan.

In terms of processing, phosvitin, an egg yolk storage protein, is one of the most highly phosphorylated (10%) proteins in nature. In terms of tissue distribution, produced by the liver, secreted into the blood and then sequestered by receptor mediated endocytosis into growing oocytes, where it is generally cleaved, giving rise to the respective yolk components lipovitellin-I, phosvitin, lipovitellin-II.

Its function is as follows. Precursor of the major egg-yolk proteins that are sources of nutrients during early development of oviparous organisms. The polypeptide is Vitellogenin (vtg1) (Oncorhynchus mykiss (Rainbow trout)).